The chain runs to 604 residues: Glutamine--fructose-6-phosphate aminotransferase [isomerizing] (604 aa).

Catalysis depends on C2, which acts as the Nucleophile; for GATase activity. In terms of domain architecture, Glutamine amidotransferase type-2 spans 2-218; the sequence is CGIVGVVGNR…DKELVVLTKD (217 aa). 2 consecutive SIS domains span residues 284 to 423 and 456 to 594; these read IVKS…ANGK and VANL…VDKP. The active-site For Fru-6P isomerization activity is K599.

As to quaternary structure, homodimer.

It is found in the cytoplasm. The catalysed reaction is D-fructose 6-phosphate + L-glutamine = D-glucosamine 6-phosphate + L-glutamate. Its function is as follows. Catalyzes the first step in hexosamine metabolism, converting fructose-6P into glucosamine-6P using glutamine as a nitrogen source. The protein is Glutamine--fructose-6-phosphate aminotransferase [isomerizing] of Streptococcus mutans serotype c (strain ATCC 700610 / UA159).